The sequence spans 358 residues: GMP reductase (358 aa).

NADP(+) contacts are provided by residues 26 to 27, Lys78, 130 to 132, and 181 to 182; these read SR, DVA, and IG. K(+) contacts are provided by Gly182, Gly184, and Cys187. The active-site Thioimidate intermediate is Cys187. Thr189 serves as the catalytic Proton donor/acceptor. Arg190 is a K(+) binding site. Residues 220–222, 243–244, 269–271, and 287–291 contribute to the GMP site; these read DGG, GG, GMS, and RASEG. NADP(+)-binding positions include Met270, 286 to 287, and 315 to 318; these read YR and SACT.

Belongs to the IMPDH/GMPR family. GuaC type 1 subfamily. In terms of assembly, homotetramer.

The enzyme catalyses IMP + NH4(+) + NADP(+) = GMP + NADPH + 2 H(+). Functionally, catalyzes the irreversible NADPH-dependent deamination of GMP to IMP. It functions in the conversion of nucleobase, nucleoside and nucleotide derivatives of G to A nucleotides, and in maintaining the intracellular balance of A and G nucleotides. The protein is GMP reductase of Caenorhabditis elegans.